The chain runs to 445 residues: Aminopeptidase S (445 aa).

Positions 1–45 are cleaved as a signal peptide; that stretch reads MRPNRFSLRRSPTAVAAVALAAVLAAGAPAAQAAGAAAPTAAAAA. Ca(2+)-binding residues include Asp-48 and Ile-49. Zn(2+) contacts are provided by His-130 and Asp-142. The active-site Proton acceptor is Glu-176. Zn(2+) contacts are provided by Glu-177, Asp-205, and His-292. Cys-290 and Cys-295 are joined by a disulfide. Positions 307 and 311 each coordinate Ca(2+). Residues 325 to 445 enclose the P/Homo B domain; it reads GEPPTGEGVF…GYIDSWKLTF (121 aa). A propeptide spans 330–445 (removed in mature form); sequence GEGVFSNTTD…GYIDSWKLTF (116 aa).

The protein belongs to the peptidase M28 family. M28A subfamily. As to quaternary structure, monomer. Requires Ca(2+) as cofactor. It depends on Zn(2+) as a cofactor. Mn(2+) serves as cofactor. Co(2+) is required as a cofactor.

The protein resides in the secreted. It catalyses the reaction Release of an N-terminal amino acid with a preference for large hydrophobic amino-terminus residues.. Its activity is regulated as follows. Calcium activates the enzyme, inhibited by 1,10-phenanthroline, EDTA and EGTA. End-product inhibited by L-amino acids. Non-competitively inhibited by NaF and NaH(2)PO(4). In terms of biological role, an exopeptidase specific for larger hydrophobic amino acids (especially leucine), no cleavage occurs if the next residue is proline. This is Aminopeptidase S from Streptomyces griseus subsp. griseus (strain JCM 4626 / CBS 651.72 / NBRC 13350 / KCC S-0626 / ISP 5235).